The primary structure comprises 398 residues: Succinate--CoA ligase [ADP-forming] subunit beta (398 aa).

One can recognise an ATP-grasp domain in the interval Lys-9–Glu-254. ATP is bound by residues Lys-46, Gly-53–Gly-55, Glu-109, Ala-112, and Glu-117. Mg(2+)-binding residues include Asn-209 and Asp-223. Substrate-binding positions include Asn-274 and Gly-331–Met-333.

Belongs to the succinate/malate CoA ligase beta subunit family. In terms of assembly, heterotetramer of two alpha and two beta subunits. The cofactor is Mg(2+).

It catalyses the reaction succinate + ATP + CoA = succinyl-CoA + ADP + phosphate. The catalysed reaction is GTP + succinate + CoA = succinyl-CoA + GDP + phosphate. It functions in the pathway carbohydrate metabolism; tricarboxylic acid cycle; succinate from succinyl-CoA (ligase route): step 1/1. Functionally, succinyl-CoA synthetase functions in the citric acid cycle (TCA), coupling the hydrolysis of succinyl-CoA to the synthesis of either ATP or GTP and thus represents the only step of substrate-level phosphorylation in the TCA. The beta subunit provides nucleotide specificity of the enzyme and binds the substrate succinate, while the binding sites for coenzyme A and phosphate are found in the alpha subunit. In Bartonella quintana (strain Toulouse) (Rochalimaea quintana), this protein is Succinate--CoA ligase [ADP-forming] subunit beta.